We begin with the raw amino-acid sequence, 284 residues long: MLRVAVPNKGSLSQTATHILEEAGYRMRRDSKDLTSWDEQNDVEFFFLRPKDIAIYVAKGHLDLGITGRDLAADSAANGVDELLALGFGASTFRYAAPENEEWNLNKIEGKRIATSYPHLVSADLAKRGIQADVIRLDGAVEISIRLGVADIIADVVSTGRTLRQQGLSPFGDVICTSEAIIVGRHNQPVTDEHQILLRRIEGILHAKNYLMIDYNCPKSLLAEATKLTPGLSAPTVSPLADDDWVAVRAMAPRKDANQLMDRLSALGAEAILATDIRIARLTR.

Belongs to the ATP phosphoribosyltransferase family. Long subfamily. Mg(2+) is required as a cofactor.

Its subcellular location is the cytoplasm. It catalyses the reaction 1-(5-phospho-beta-D-ribosyl)-ATP + diphosphate = 5-phospho-alpha-D-ribose 1-diphosphate + ATP. It participates in amino-acid biosynthesis; L-histidine biosynthesis; L-histidine from 5-phospho-alpha-D-ribose 1-diphosphate: step 1/9. Feedback inhibited by histidine. In terms of biological role, catalyzes the condensation of ATP and 5-phosphoribose 1-diphosphate to form N'-(5'-phosphoribosyl)-ATP (PR-ATP). Has a crucial role in the pathway because the rate of histidine biosynthesis seems to be controlled primarily by regulation of HisG enzymatic activity. The protein is ATP phosphoribosyltransferase of Corynebacterium kroppenstedtii (strain DSM 44385 / JCM 11950 / CIP 105744 / CCUG 35717).